We begin with the raw amino-acid sequence, 342 residues long: Oxygen-dependent coproporphyrinogen-III oxidase (342 aa).

Position 98 (Ser-98) interacts with substrate. Residues His-102 and His-112 each coordinate a divalent metal cation. The active-site Proton donor is the His-112. 114-116 (NYR) contributes to the substrate binding site. 2 residues coordinate a divalent metal cation: His-146 and His-176. The tract at residues 266 to 301 (YVEFNLVWDRGTIFGLQTNGRTESILMSLPPLARWE) is important for dimerization.

This sequence belongs to the aerobic coproporphyrinogen-III oxidase family. As to quaternary structure, homodimer. A divalent metal cation serves as cofactor.

The protein localises to the cytoplasm. The enzyme catalyses coproporphyrinogen III + O2 + 2 H(+) = protoporphyrinogen IX + 2 CO2 + 2 H2O. Its pathway is porphyrin-containing compound metabolism; protoporphyrin-IX biosynthesis; protoporphyrinogen-IX from coproporphyrinogen-III (O2 route): step 1/1. Involved in the heme and chlorophyll biosynthesis. Catalyzes the aerobic oxidative decarboxylation of propionate groups of rings A and B of coproporphyrinogen-III to yield the vinyl groups in protoporphyrinogen-IX. The chain is Oxygen-dependent coproporphyrinogen-III oxidase from Prochlorococcus marinus (strain AS9601).